The sequence spans 581 residues: uncharacterized protein (581 aa).

S28 bears the Phosphoserine mark. 11 consecutive transmembrane segments (helical) span residues 61–81, 100–120, 125–145, 187–207, 214–234, 340–360, 382–402, 426–446, 458–478, 486–506, and 522–542; these read LVLICLVSLVTGAIANDAGSA, AGVLFICVGYFTYLAMPATFL, CVYLVCLLFGMLGSMWFALVK, IYILSTSVGTYLGPLAAGYIA, WIGWWGLIISGITFVLFLFTF, IFLFPAVLYSGLQWGAQDAWL, AVAIMNVPCIIGATIGCIYGG, LWLMILPCIINPIGLFMFGIG, VGLGFIGFGWGCAGDISMAYL, VLEAMVGVSVINNTFGYVFTF, and ISIGVLCFIFIATSFPMILCG.

This sequence belongs to the major facilitator superfamily.

Its subcellular location is the cytoplasm. It localises to the cell cortex. The protein resides in the membrane. This is an uncharacterized protein from Schizosaccharomyces pombe (strain 972 / ATCC 24843) (Fission yeast).